We begin with the raw amino-acid sequence, 116 residues long: Methionine-R-sulfoxide reductase B1 (116 aa).

One can recognise a MsrB domain in the interval 1–106 (MSFCSFFGGE…FSSSLKFVPK (106 aa)). Residues cysteine 23, cysteine 26, cysteine 71, and cysteine 74 each coordinate Zn(2+). Selenocysteine 95 functions as the Nucleophile in the catalytic mechanism. A non-standard amino acid (selenocysteine) is located at residue selenocysteine 95.

The protein belongs to the MsrB Met sulfoxide reductase family. Zn(2+) serves as cofactor. Truncated MSRB1/SEPX1 proteins produced by failed UGA/Sec decoding are ubiquitinated by the CRL2(FEM1C) E3 ubiquitin-protein ligase complex.

Its subcellular location is the cytoplasm. The protein localises to the nucleus. It localises to the cytoskeleton. It catalyses the reaction L-methionyl-[protein] + [thioredoxin]-disulfide + H2O = L-methionyl-(R)-S-oxide-[protein] + [thioredoxin]-dithiol. The catalysed reaction is [thioredoxin]-disulfide + L-methionine + H2O = L-methionine (R)-S-oxide + [thioredoxin]-dithiol. Functionally, methionine-sulfoxide reductase that specifically reduces methionine (R)-sulfoxide back to methionine. While in many cases, methionine oxidation is the result of random oxidation following oxidative stress, methionine oxidation is also a post-translational modification that takes place on specific residue. Acts as a regulator of actin assembly by reducing methionine (R)-sulfoxide mediated by MICALs (MICAL1, MICAL2 or MICAL3) on actin, thereby promoting filament repolymerization. Plays a role in innate immunity by reducing oxidized actin, leading to actin repolymerization in macrophages. In Mus musculus (Mouse), this protein is Methionine-R-sulfoxide reductase B1 (Msrb1).